A 356-amino-acid polypeptide reads, in one-letter code: INO80 complex subunit B (356 aa).

Residues 1–71 (MSKLWRRGST…PSPAKPQLKL (71 aa)) are disordered. Residues 33 to 51 (HGVHKKKHKKHKKKHKKKH) show a composition bias toward basic residues. Residues serine 97, serine 99, serine 127, serine 130, and serine 132 each carry the phosphoserine modification. The tract at residues 124–150 (DEDSNLSPSPLRDLSGGLGGQEEEEEQ) is disordered. Residues 213–245 (LLKREERARKRRLQAARRAEEHKNQTIERLTKT) are a coiled coil. Disordered regions lie at residues 246-269 (AATS…AAAP) and 286-310 (FPPG…PRCS). An HIT-type zinc finger spans residues 305–336 (PPPRCSVPGCPHPRRYACSRTGQALCSLQCYR).

Component of the chromatin remodeling INO80 complex; specifically part of a complex module associated with the helicase ATP-binding and the helicase C-terminal domain of INO80. Interacts with RP9.

The protein localises to the nucleus. The protein resides in the nucleolus. Functionally, induces growth and cell cycle arrests at the G1 phase of the cell cycle. Proposed core component of the chromatin remodeling INO80 complex which is involved in transcriptional regulation, DNA replication and probably DNA repair. This Homo sapiens (Human) protein is INO80 complex subunit B (INO80B).